Reading from the N-terminus, the 260-residue chain is DNA repair protein RecO (260 aa).

The protein belongs to the RecO family.

Involved in DNA repair and RecF pathway recombination. The sequence is that of DNA repair protein RecO from Streptococcus suis (strain 98HAH33).